The sequence spans 263 residues: Probable WRKY transcription factor 62 (263 aa).

Positions 59-104 (DHQDDQSNNSSPQDSSPVLESSRKPLHKRGRKTSMAESSDYHRHES) are disordered. Positions 64–74 (QSNNSSPQDSS) are enriched in low complexity. Residues 104-174 (SSTPIYHDGF…GQHICQLHQA (71 aa)) constitute a DNA-binding region (WRKY).

Belongs to the WRKY group III family.

It is found in the nucleus. Transcription factor. Interacts specifically with the W box (5'-(T)TGAC[CT]-3'), a frequently occurring elicitor-responsive cis-acting element. In Arabidopsis thaliana (Mouse-ear cress), this protein is Probable WRKY transcription factor 62 (WRKY62).